The primary structure comprises 349 residues: 4-hydroxythreonine-4-phosphate dehydrogenase (349 aa).

Threonine 135 contributes to the substrate binding site. Positions 170, 215, and 276 each coordinate a divalent metal cation. 3 residues coordinate substrate: lysine 284, asparagine 293, and arginine 302.

It belongs to the PdxA family. In terms of assembly, homodimer. A divalent metal cation serves as cofactor.

It is found in the cytoplasm. It carries out the reaction 4-(phosphooxy)-L-threonine + NAD(+) = 3-amino-2-oxopropyl phosphate + CO2 + NADH. It participates in cofactor biosynthesis; pyridoxine 5'-phosphate biosynthesis; pyridoxine 5'-phosphate from D-erythrose 4-phosphate: step 4/5. Functionally, catalyzes the NAD(P)-dependent oxidation of 4-(phosphooxy)-L-threonine (HTP) into 2-amino-3-oxo-4-(phosphooxy)butyric acid which spontaneously decarboxylates to form 3-amino-2-oxopropyl phosphate (AHAP). This Synechococcus sp. (strain JA-3-3Ab) (Cyanobacteria bacterium Yellowstone A-Prime) protein is 4-hydroxythreonine-4-phosphate dehydrogenase.